Here is a 352-residue protein sequence, read N- to C-terminus: Schlafen-like protein 4 (352 aa).

Residues 87–235 (FEYQSNFSEV…SDKVYQISSG (149 aa)) are SLFN-like fold. Residues 326–343 (IQNIGWIFFGTALSCCIY) form a helical membrane-spanning segment.

Belongs to the Schlafen family. As to quaternary structure, component of the PUCH (precursor of 21U RNA 5'-end cleavage holoenzyme) complex; consisting of tofu-1, tofu-2 and either slfl-3 or slfl-4.

The protein resides in the membrane. Component of the trimeric PUCH (precursor of 21U RNA 5'-end cleavage holoenzyme) complex, that acts as an endoribonuclease processing the 5'-end of precursor Piwi-interacting RNAs (piRNAs). The PUCH complex consists of tofu-1, tofu-2 and either slfl-3 or slfl-4, where tofu-2 exhibits endoribonuclease activity. PUCH-mediated processing strictly requires a 7-methyl-G cap (m7 G-cap) and an uracil at position three (U3). PUCH also exhibits a strict bias for piRNA precursors with an A or G at position 1. Mature piRNA production is enhanced by the interaction of PUCH with the PETISCO complex, which is stabilizing piRNA precursors and allows their processing by PUCH. This Caenorhabditis elegans protein is Schlafen-like protein 4.